The primary structure comprises 97 residues: Small integral membrane protein 8 (97 aa).

Residues 1 to 14 (MSSPSSESSNAKSS) are compositionally biased toward low complexity. The disordered stretch occupies residues 1-26 (MSSPSSESSNAKSSPPKEEYRTPGLR). The chain crosses the membrane as a helical span at residues 49-69 (VMVFGIVTITMCVAYIAYLHA).

The protein belongs to the SMIM8 family.

It localises to the membrane. In Xenopus tropicalis (Western clawed frog), this protein is Small integral membrane protein 8 (smim8).